The primary structure comprises 316 residues: Holliday junction branch migration complex subunit RuvB (316 aa).

Residues 1–165 (MQITRPHNFE…FGYIARFVSY (165 aa)) form a large ATPase domain (RuvB-L) region. ATP-binding positions include arginine 5, glycine 46, lysine 49, threonine 50, serine 51, 112–114 (EDF), arginine 155, tyrosine 165, and arginine 202. Position 50 (threonine 50) interacts with Mg(2+). Residues 166–236 (NAEDMKQIIR…IIKKTFKSLD (71 aa)) form a small ATPAse domain (RuvB-S) region. The interval 239 to 316 (EYGLTKDHVE…TYLLKEKLIW (78 aa)) is head domain (RuvB-H). Positions 294 and 299 each coordinate DNA.

This sequence belongs to the RuvB family. Homohexamer. Forms an RuvA(8)-RuvB(12)-Holliday junction (HJ) complex. HJ DNA is sandwiched between 2 RuvA tetramers; dsDNA enters through RuvA and exits via RuvB. An RuvB hexamer assembles on each DNA strand where it exits the tetramer. Each RuvB hexamer is contacted by two RuvA subunits (via domain III) on 2 adjacent RuvB subunits; this complex drives branch migration. In the full resolvosome a probable DNA-RuvA(4)-RuvB(12)-RuvC(2) complex forms which resolves the HJ.

The protein resides in the cytoplasm. It carries out the reaction ATP + H2O = ADP + phosphate + H(+). In terms of biological role, the RuvA-RuvB-RuvC complex processes Holliday junction (HJ) DNA during genetic recombination and DNA repair, while the RuvA-RuvB complex plays an important role in the rescue of blocked DNA replication forks via replication fork reversal (RFR). RuvA specifically binds to HJ cruciform DNA, conferring on it an open structure. The RuvB hexamer acts as an ATP-dependent pump, pulling dsDNA into and through the RuvAB complex. RuvB forms 2 homohexamers on either side of HJ DNA bound by 1 or 2 RuvA tetramers; 4 subunits per hexamer contact DNA at a time. Coordinated motions by a converter formed by DNA-disengaged RuvB subunits stimulates ATP hydrolysis and nucleotide exchange. Immobilization of the converter enables RuvB to convert the ATP-contained energy into a lever motion, pulling 2 nucleotides of DNA out of the RuvA tetramer per ATP hydrolyzed, thus driving DNA branch migration. The RuvB motors rotate together with the DNA substrate, which together with the progressing nucleotide cycle form the mechanistic basis for DNA recombination by continuous HJ branch migration. Branch migration allows RuvC to scan DNA until it finds its consensus sequence, where it cleaves and resolves cruciform DNA. This is Holliday junction branch migration complex subunit RuvB from Mycoplasmopsis synoviae (strain 53) (Mycoplasma synoviae).